Consider the following 278-residue polypeptide: Diaminopimelate epimerase (278 aa).

Substrate contacts are provided by asparagine 13, glutamine 49, and asparagine 68. Cysteine 77 serves as the catalytic Proton donor. Substrate is bound by residues 78-79 (GN), asparagine 161, asparagine 194, and 212-213 (ER). Cysteine 221 functions as the Proton acceptor in the catalytic mechanism. 222 to 223 (GT) is a binding site for substrate.

It belongs to the diaminopimelate epimerase family. In terms of assembly, homodimer.

The protein resides in the cytoplasm. The catalysed reaction is (2S,6S)-2,6-diaminopimelate = meso-2,6-diaminopimelate. The protein operates within amino-acid biosynthesis; L-lysine biosynthesis via DAP pathway; DL-2,6-diaminopimelate from LL-2,6-diaminopimelate: step 1/1. In terms of biological role, catalyzes the stereoinversion of LL-2,6-diaminopimelate (L,L-DAP) to meso-diaminopimelate (meso-DAP), a precursor of L-lysine and an essential component of the bacterial peptidoglycan. This chain is Diaminopimelate epimerase, found in Nitrosomonas eutropha (strain DSM 101675 / C91 / Nm57).